A 388-amino-acid polypeptide reads, in one-letter code: Leucine aminopeptidase 1 (388 aa).

An N-terminal signal peptide occupies residues 1 to 19 (MRSSVLFSLYAATLVAAVA). The propeptide occupies 20 to 88 (HPKDPQIVLQ…TLNHKLSTES (69 aa)). A glycan (N-linked (GlcNAc...) asparagine) is linked at N98. Positions 187, 206, 245, and 272 each coordinate Zn(2+). A disulfide bridge connects residues C321 and C325. Residue H354 participates in Zn(2+) binding.

Belongs to the peptidase M28 family. M28E subfamily. In terms of assembly, monomer. Requires Zn(2+) as cofactor.

Its subcellular location is the secreted. In terms of biological role, extracellular aminopeptidase that allows assimilation of proteinaceous substrates. The chain is Leucine aminopeptidase 1 (LAP1) from Leptosphaeria maculans (strain JN3 / isolate v23.1.3 / race Av1-4-5-6-7-8) (Blackleg fungus).